Consider the following 490-residue polypeptide: Aspartyl/glutamyl-tRNA(Asn/Gln) amidotransferase subunit B (490 aa).

This sequence belongs to the GatB/GatE family. GatB subfamily. In terms of assembly, heterotrimer of A, B and C subunits.

It carries out the reaction L-glutamyl-tRNA(Gln) + L-glutamine + ATP + H2O = L-glutaminyl-tRNA(Gln) + L-glutamate + ADP + phosphate + H(+). The enzyme catalyses L-aspartyl-tRNA(Asn) + L-glutamine + ATP + H2O = L-asparaginyl-tRNA(Asn) + L-glutamate + ADP + phosphate + 2 H(+). Allows the formation of correctly charged Asn-tRNA(Asn) or Gln-tRNA(Gln) through the transamidation of misacylated Asp-tRNA(Asn) or Glu-tRNA(Gln) in organisms which lack either or both of asparaginyl-tRNA or glutaminyl-tRNA synthetases. The reaction takes place in the presence of glutamine and ATP through an activated phospho-Asp-tRNA(Asn) or phospho-Glu-tRNA(Gln). The sequence is that of Aspartyl/glutamyl-tRNA(Asn/Gln) amidotransferase subunit B from Methylobacterium nodulans (strain LMG 21967 / CNCM I-2342 / ORS 2060).